The primary structure comprises 372 residues: Germination protease (372 aa).

Positions 1-15 are excised as a propeptide; sequence MVKELNLEQYNVRTD.

It belongs to the peptidase A25 family. In terms of assembly, homotetramer. Post-translationally, autoproteolytically processed. The inactive tetrameric zymogen termed p46 autoprocesses to a smaller form termed p41, which is active only during spore germination.

It carries out the reaction Endopeptidase action with P4 Glu or Asp, P1 preferably Glu &gt; Asp, P1' hydrophobic and P2' Ala.. Its function is as follows. Initiates the rapid degradation of small, acid-soluble proteins during spore germination. In Halalkalibacterium halodurans (strain ATCC BAA-125 / DSM 18197 / FERM 7344 / JCM 9153 / C-125) (Bacillus halodurans), this protein is Germination protease.